A 450-amino-acid chain; its full sequence is ATP-dependent protease ATPase subunit HslU (450 aa).

ATP-binding positions include Val-29, 71–76 (GVGKTE), Asp-261, Glu-328, and Arg-400.

This sequence belongs to the ClpX chaperone family. HslU subfamily. As to quaternary structure, a double ring-shaped homohexamer of HslV is capped on each side by a ring-shaped HslU homohexamer. The assembly of the HslU/HslV complex is dependent on binding of ATP.

It is found in the cytoplasm. ATPase subunit of a proteasome-like degradation complex; this subunit has chaperone activity. The binding of ATP and its subsequent hydrolysis by HslU are essential for unfolding of protein substrates subsequently hydrolyzed by HslV. HslU recognizes the N-terminal part of its protein substrates and unfolds these before they are guided to HslV for hydrolysis. The protein is ATP-dependent protease ATPase subunit HslU of Rickettsia prowazekii (strain Madrid E).